The following is a 179-amino-acid chain: MNQLTSLYLAALNRVTWQQPDDIEFPAPLAQQWLLEQGSLSRRMATQCEHLTVDLLSNQIMLADTLSYDETQLLASEEYLLRQVIIYGDQQPWVFGHTLIPRSSMHNQPFDFTQQGKIPLGLTVFSADNVKRDALQVGWVETELGRLLARRSRLWMNNKPMLVTELFLATSPIYSKERV.

Substrate-binding residues include arginine 82, leucine 120, and glutamate 165.

Belongs to the UbiC family.

Its subcellular location is the cytoplasm. The enzyme catalyses chorismate = 4-hydroxybenzoate + pyruvate. It participates in cofactor biosynthesis; ubiquinone biosynthesis. Its function is as follows. Removes the pyruvyl group from chorismate, with concomitant aromatization of the ring, to provide 4-hydroxybenzoate (4HB) for the ubiquinone pathway. The polypeptide is Probable chorismate pyruvate-lyase (Vibrio cholerae serotype O1 (strain ATCC 39315 / El Tor Inaba N16961)).